The primary structure comprises 123 residues: Large ribosomal subunit protein bL12 (123 aa).

Belongs to the bacterial ribosomal protein bL12 family. As to quaternary structure, homodimer. Part of the ribosomal stalk of the 50S ribosomal subunit. Forms a multimeric L10(L12)X complex, where L10 forms an elongated spine to which 2 to 4 L12 dimers bind in a sequential fashion. Binds GTP-bound translation factors.

In terms of biological role, forms part of the ribosomal stalk which helps the ribosome interact with GTP-bound translation factors. Is thus essential for accurate translation. The polypeptide is Large ribosomal subunit protein bL12 (Acholeplasma laidlawii (strain PG-8A)).